Consider the following 352-residue polypeptide: Selenide, water dikinase (352 aa).

Cys23 is a catalytic residue. ATP contacts are provided by residues Lys26 and 54–56 (SRD). Residue Asp57 participates in Mg(2+) binding. ATP is bound by residues Asp74, Asp97, and 145-147 (GHS). Asp97 contacts Mg(2+). Asp233 contacts Mg(2+).

This sequence belongs to the selenophosphate synthase 1 family. Class I subfamily. Homodimer. The cofactor is Mg(2+).

It catalyses the reaction hydrogenselenide + ATP + H2O = selenophosphate + AMP + phosphate + 2 H(+). Its function is as follows. Synthesizes selenophosphate from selenide and ATP. The protein is Selenide, water dikinase of Shewanella baltica (strain OS223).